The primary structure comprises 517 residues: B3 domain-containing protein REM1 (517 aa).

The TF-B3 1 DNA-binding region spans 7 to 92 (FSLFQQKFRT…VFHVAVVSPS (86 aa)). Acidic residues predominate over residues 115 to 140 (DDVDDDDYGQDDEDDDDDDDEGEDNI). A disordered region spans residues 115-158 (DDVDDDDYGQDDEDDDDDDDEGEDNIENISEKTDKRQEADSSSD). Residues 143–157 (ISEKTDKRQEADSSS) are compositionally biased toward basic and acidic residues. DNA-binding regions (TF-B3) lie at residues 162-259 (FITA…CPQE) and 285-385 (FLIV…FCSK). The interval 393-415 (GKGNQRTRKKRACETAPQPRNVK) is disordered.

In terms of tissue distribution, expressed in the shoot apical meristem (SAM), in the inflorescence apex and flowers.

It is found in the nucleus. May play a role in flower development. The chain is B3 domain-containing protein REM1 (REM1) from Arabidopsis thaliana (Mouse-ear cress).